The primary structure comprises 162 residues: Nucleotide-binding protein A2cp1_0112 (162 aa).

This sequence belongs to the YajQ family.

Nucleotide-binding protein. This is Nucleotide-binding protein A2cp1_0112 from Anaeromyxobacter dehalogenans (strain 2CP-1 / ATCC BAA-258).